Consider the following 177-residue polypeptide: F(420)H(2) dehydrogenase subunit I (177 aa).

The interval 1–21 (MGCPEVQDRPGSGYELEETPA) is disordered. 2 4Fe-4S ferredoxin-type domains span residues 76-105 (GLQT…IVKA) and 116-145 (WFPQ…SGKE). 8 residues coordinate [4Fe-4S] cluster: C85, C88, C91, C95, C125, C128, C131, and C135.

It belongs to the complex I 23 kDa subunit family. As to quaternary structure, the FPO complex is composed of at least 13 different subunits. [4Fe-4S] cluster serves as cofactor.

It carries out the reaction methanophenazine + reduced coenzyme F420-(gamma-L-Glu)(n) = dihydromethanophenazine + oxidized coenzyme F420-(gamma-L-Glu)(n) + H(+). Component of the F(420)H(2) dehydrogenase (FPO complex) which is part of the energy-conserving F(420)H(2):heterodisulfide oxidoreductase system. The membrane-bound electron transfer system of the complex plays an important role in the metabolism of methylotrophic methanogens when the organisms grow on methanol or methylamines. Catalyzes the oxidation of methanophenazine to dihydromethanophenazine. It shuttles electrons from F(420)H(2), via FAD and iron-sulfur (Fe-S) centers, to methanophenazine (an electron carrier in the membrane). It couples the redox reaction to proton translocation (for every two electrons transferred, two hydrogen ions are translocated across the cytoplasmic membrane), and thus conserves the redox energy in a proton gradient. It also catalyzes the oxidation of F(420)H(2) with quinones such as 2,3-dimethyl-1,4-naphthoquinone, 2-methyl-1,4-naphthoquinone and tetramethyl-p-benzoquinone. The sequence is that of F(420)H(2) dehydrogenase subunit I (fpoI) from Methanosarcina mazei (strain ATCC BAA-159 / DSM 3647 / Goe1 / Go1 / JCM 11833 / OCM 88) (Methanosarcina frisia).